Reading from the N-terminus, the 230-residue chain is Ribose-5-phosphate isomerase A (230 aa).

Residues 32-35 (TGST), 85-88 (DGAD), and 98-101 (KGGG) contribute to the substrate site. The active-site Proton acceptor is glutamate 107. Lysine 125 serves as a coordination point for substrate.

This sequence belongs to the ribose 5-phosphate isomerase family. In terms of assembly, homodimer.

The catalysed reaction is aldehydo-D-ribose 5-phosphate = D-ribulose 5-phosphate. It functions in the pathway carbohydrate degradation; pentose phosphate pathway; D-ribose 5-phosphate from D-ribulose 5-phosphate (non-oxidative stage): step 1/1. In terms of biological role, catalyzes the reversible conversion of ribose-5-phosphate to ribulose 5-phosphate. The chain is Ribose-5-phosphate isomerase A from Burkholderia vietnamiensis (strain G4 / LMG 22486) (Burkholderia cepacia (strain R1808)).